The following is an 875-amino-acid chain: Aminopeptidase M1-B (875 aa).

The tract at residues 96-203 is required for membrane association; that stretch reads IGEGVLKMDF…MSTYLVAIVV (108 aa). Substrate is bound by residues E136 and 269-273; that span reads GAMEN. H305 is a Zn(2+) binding site. Catalysis depends on E306, which acts as the Proton acceptor. Zn(2+)-binding residues include H309 and E328. The Dileucine internalization motif signature appears at 722 to 723; sequence LL.

Belongs to the peptidase M1 family. As to quaternary structure, homodimer. Requires Zn(2+) as cofactor.

Its subcellular location is the membrane. It is found in the microsome membrane. The protein localises to the cytoplasm. The catalysed reaction is Release of an N-terminal amino acid, Xaa-|-Yaa- from a peptide, amide or arylamide. Xaa is preferably Ala, but may be most amino acids including Pro (slow action). When a terminal hydrophobic residue is followed by a prolyl residue, the two may be released as an intact Xaa-Pro dipeptide.. The polypeptide is Aminopeptidase M1-B (Oryza sativa subsp. japonica (Rice)).